We begin with the raw amino-acid sequence, 327 residues long: Malate dehydrogenase (327 aa).

Residue 11 to 17 (GAAGQIS) participates in NAD(+) binding. Substrate contacts are provided by Arg-92 and Arg-98. NAD(+)-binding positions include Asn-105, Gln-112, and 129–131 (VGN). Substrate contacts are provided by Asn-131 and Arg-162. His-187 functions as the Proton acceptor in the catalytic mechanism.

This sequence belongs to the LDH/MDH superfamily. MDH type 2 family.

It catalyses the reaction (S)-malate + NAD(+) = oxaloacetate + NADH + H(+). In terms of biological role, catalyzes the reversible oxidation of malate to oxaloacetate. The chain is Malate dehydrogenase from Nitrosomonas europaea (strain ATCC 19718 / CIP 103999 / KCTC 2705 / NBRC 14298).